A 198-amino-acid polypeptide reads, in one-letter code: Elongation factor Ts (198 aa).

Residues 81-84 form an involved in Mg(2+) ion dislocation from EF-Tu region; it reads TDFV.

It belongs to the EF-Ts family.

Its subcellular location is the cytoplasm. Functionally, associates with the EF-Tu.GDP complex and induces the exchange of GDP to GTP. It remains bound to the aminoacyl-tRNA.EF-Tu.GTP complex up to the GTP hydrolysis stage on the ribosome. The chain is Elongation factor Ts from Leptospira biflexa serovar Patoc (strain Patoc 1 / Ames).